A 37-amino-acid chain; its full sequence is Large ribosomal subunit protein bL36c (37 aa).

It belongs to the bacterial ribosomal protein bL36 family.

It localises to the plastid. The protein localises to the chloroplast. This Phaseolus angularis (Azuki bean) protein is Large ribosomal subunit protein bL36c.